The following is a 65-amino-acid chain: Conotoxin tx3c (65 aa).

The N-terminal stretch at 1-19 (MFKLGVLLTICLLLFSLNA) is a signal peptide. A propeptide spanning residues 20–50 (VPLDGDQPADQPAERLLDDISFENNPFYDPA) is cleaved from the precursor. 3 disulfides stabilise this stretch: Cys53–Cys64, Cys54–Cys60, and Cys57–Cys63. Position 62 is a 4-hydroxyproline; partial (Pro62). At Cys64 the chain carries Cysteine amide.

In terms of processing, the hydroxylation at Pro-62 is observed in PubMed:15924437, PubMed:19380747 and PubMed:22709442, and the non-hydroxylation is described in PubMed:22709442. Expressed by the venom duct.

The protein resides in the secreted. Functionally, causes scratching in mice. The protein is Conotoxin tx3c of Conus textile (Cloth-of-gold cone).